The chain runs to 375 residues: Queuine tRNA-ribosyltransferase (375 aa).

D90 (proton acceptor) is an active-site residue. Residues 90-94 (DSGGF), D144, Q193, and G220 contribute to the substrate site. The RNA binding stretch occupies residues 251–257 (GVGTPED). D270 serves as the catalytic Nucleophile. The interval 275 to 279 (TRNAR) is RNA binding; important for wobble base 34 recognition. C308, C310, C313, and H339 together coordinate Zn(2+).

It belongs to the queuine tRNA-ribosyltransferase family. As to quaternary structure, homodimer. Within each dimer, one monomer is responsible for RNA recognition and catalysis, while the other monomer binds to the replacement base PreQ1. The cofactor is Zn(2+).

The catalysed reaction is 7-aminomethyl-7-carbaguanine + guanosine(34) in tRNA = 7-aminomethyl-7-carbaguanosine(34) in tRNA + guanine. It functions in the pathway tRNA modification; tRNA-queuosine biosynthesis. In terms of biological role, catalyzes the base-exchange of a guanine (G) residue with the queuine precursor 7-aminomethyl-7-deazaguanine (PreQ1) at position 34 (anticodon wobble position) in tRNAs with GU(N) anticodons (tRNA-Asp, -Asn, -His and -Tyr). Catalysis occurs through a double-displacement mechanism. The nucleophile active site attacks the C1' of nucleotide 34 to detach the guanine base from the RNA, forming a covalent enzyme-RNA intermediate. The proton acceptor active site deprotonates the incoming PreQ1, allowing a nucleophilic attack on the C1' of the ribose to form the product. After dissociation, two additional enzymatic reactions on the tRNA convert PreQ1 to queuine (Q), resulting in the hypermodified nucleoside queuosine (7-(((4,5-cis-dihydroxy-2-cyclopenten-1-yl)amino)methyl)-7-deazaguanosine). The polypeptide is Queuine tRNA-ribosyltransferase (Methylibium petroleiphilum (strain ATCC BAA-1232 / LMG 22953 / PM1)).